The primary structure comprises 521 residues: Importin subunit alpha-4 (521 aa).

The tract at residues Met1–Arg29 is disordered. Ala2 is subject to N-acetylalanine. Positions Ala2–Glu58 constitute an IBB domain. A compositionally biased stretch (basic and acidic residues) spans Lys18–Arg29. The short motif at Glu43–Pro52 is the Nuclear localization signal element. Ser56 and Ser60 each carry phosphoserine. An ARM 1; truncated repeat occupies Phe66–Pro106. ARM repeat units lie at residues Ile107 to Gln149, Thr150 to Tyr194, Val195 to Pro233, Pro234 to Gln278, Met279 to Gln318, Thr319 to Gln360, Val361 to Arg400, and Lys401 to Gly443. Residues Trp137–Arg229 form an NLS binding site (major) region. The NLS binding site (minor) stretch occupies residues Arg306–Asn394. Residues Ser447 to Phe485 form an ARM 10; atypical repeat. Tyr484 bears the Phosphotyrosine mark.

The protein belongs to the importin alpha family. Forms a complex with importin subunit beta-1. Interacts with DDX21. Interacts with NCBP1, NCBP2/CBP20 and NCBP3. Interacts with RCC1. Interacts with ZC3H11A. In terms of assembly, (Microbial infection) Interacts with HIV-1 integrase; this interaction might play a role in nuclear import of HIV pre-integration complex. As to quaternary structure, (Microbial infection) Interacts with influenza virus nucleoprotein; this interaction might play a role in nuclear import of viral genome. As to expression, ubiquitous. Highest levels in heart and skeletal muscle.

It is found in the cytoplasm. Its subcellular location is the nucleus. Its function is as follows. Functions in nuclear protein import as an adapter protein for nuclear receptor KPNB1. Binds specifically and directly to substrates containing either a simple or bipartite NLS motif. Docking of the importin/substrate complex to the nuclear pore complex (NPC) is mediated by KPNB1 through binding to nucleoporin FxFG repeats and the complex is subsequently translocated through the pore by an energy requiring, Ran-dependent mechanism. At the nucleoplasmic side of the NPC, Ran binds to importin-beta and the three components separate and importin-alpha and -beta are re-exported from the nucleus to the cytoplasm where GTP hydrolysis releases Ran from importin. The directionality of nuclear import is thought to be conferred by an asymmetric distribution of the GTP- and GDP-bound forms of Ran between the cytoplasm and nucleus. In vitro, mediates the nuclear import of human cytomegalovirus UL84 by recognizing a non-classical NLS. Recognizes NLSs of influenza A virus nucleoprotein probably through ARM repeats 7-9. The sequence is that of Importin subunit alpha-4 (KPNA3) from Homo sapiens (Human).